The chain runs to 644 residues: Exoribonuclease 2 (644 aa).

An RNB domain is found at 189–516; that stretch reads RRDLTALNFV…NHRLLKAIVK (328 aa). One can recognise an S1 motif domain in the interval 561-643; it reads DTRFAAEIID…ETRSIIARPV (83 aa).

This sequence belongs to the RNR ribonuclease family. RNase II subfamily.

The protein resides in the cytoplasm. It carries out the reaction Exonucleolytic cleavage in the 3'- to 5'-direction to yield nucleoside 5'-phosphates.. Involved in mRNA degradation. Hydrolyzes single-stranded polyribonucleotides processively in the 3' to 5' direction. The chain is Exoribonuclease 2 from Enterobacter sp. (strain 638).